The chain runs to 133 residues: Protein msa (133 aa).

The next 4 helical transmembrane spans lie at 3–23, 27–47, 55–75, and 103–123; these read YLIL…AIGL, ILAA…ILFF, YIFF…VHLM, and FGFD…IVLY.

It localises to the cell membrane. Accessory element involved in the expression of sarA and several virulence factors. Modulates SarA production and/or function in a strain-dependent manner. Affects the transcription of the accessory gene regulator (agr) and genes encoding virulence factors including alpha toxin (hla) and protein A (spa). The chain is Protein msa (msa) from Staphylococcus aureus (strain USA300).